Consider the following 242-residue polypeptide: Probable transcriptional regulatory protein Bcen2424_2294 (242 aa).

This sequence belongs to the TACO1 family.

The protein localises to the cytoplasm. The polypeptide is Probable transcriptional regulatory protein Bcen2424_2294 (Burkholderia cenocepacia (strain HI2424)).